The chain runs to 257 residues: MSSELNIPVDPSTPAVSERGNKGMDYRDWVRRSYLELVTSNHHSVQALSWRKLYLSRAKLKASSRTSALLSGFAMVAMVEVQLEMKYGYPQLLLIAFSACTTVLVAVHLFALLISTCILPNVEAVSNIHNLNSVNESPHDRMHPYIELAWGFSTALGILLFLAEVVLLCWIKFLPIDSALTRNETATTQKPRGNAGWNSALVSTIIMVPVGIIFVIFTIHFYRTLVRHKTERHHQEIEELHKLKVQLDGHDRGINVV.

The next 4 helical transmembrane spans lie at 62-79, 94-114, 156-176, and 201-221; these read ASSR…VAMV, LIAF…ALLI, LGIL…FLPI, and LVST…TIHF.

The protein belongs to the Orai family.

It localises to the membrane. In terms of biological role, ca(2+) release-activated Ca(2+)-like (CRAC-like) channel subunit which mediates Ca(2+) influx and increase in Ca(2+)-selective current by synergy with the Ca(2+) sensor, stim1. This is Protein orai-2 (orai2) from Xenopus laevis (African clawed frog).